The primary structure comprises 352 residues: MGPHPAVAAIRLAVRRVLHDILTELNTPAGVPAATAVERTPERAPGLPTAPLVLVACSGGADSMALASALAFEAPRLGVRAGGVTVDHGLQSGSDLRAEEVVLRLRELGLDPVEATAVTVGRAGGPEAAARDARYAALDAAAARHGAAAVLLGHTRDDQAETVLLGLARGSGIRSLSGMAAVSGAGGRYRRPFLQVDRQTARKACMVQSLPVWDDPHNADPAYTRSRLRHEGLPALEKALGKGVVEALARTAQLSRDDADALDTWARQAEAGVRDATGGLECAKLYALPPAVRRRILRRAALEAGAPGGALFARHIEEVDRLITGWRGQGAINLPGKVVARRQGGRLVIRQG.

Residue 58–63 (SGGADS) participates in ATP binding.

It belongs to the tRNA(Ile)-lysidine synthase family.

The protein resides in the cytoplasm. The enzyme catalyses cytidine(34) in tRNA(Ile2) + L-lysine + ATP = lysidine(34) in tRNA(Ile2) + AMP + diphosphate + H(+). Its function is as follows. Ligates lysine onto the cytidine present at position 34 of the AUA codon-specific tRNA(Ile) that contains the anticodon CAU, in an ATP-dependent manner. Cytidine is converted to lysidine, thus changing the amino acid specificity of the tRNA from methionine to isoleucine. This Streptomyces coelicolor (strain ATCC BAA-471 / A3(2) / M145) protein is tRNA(Ile)-lysidine synthase.